The sequence spans 312 residues: Light-independent protochlorophyllide reductase iron-sulfur ATP-binding protein (312 aa).

Residues Gly-55–Thr-60 and Lys-84 each bind ATP. Ser-59 lines the Mg(2+) pocket. Residues Cys-140 and Cys-174 each coordinate [4Fe-4S] cluster. Residues Asn-225–Arg-226 and Pro-249–Leu-251 contribute to the ATP site.

This sequence belongs to the NifH/BchL/ChlL family. Homodimer. Protochlorophyllide reductase is composed of three subunits; BchL, BchN and BchB. Requires [4Fe-4S] cluster as cofactor.

The enzyme catalyses chlorophyllide a + oxidized 2[4Fe-4S]-[ferredoxin] + 2 ADP + 2 phosphate = protochlorophyllide a + reduced 2[4Fe-4S]-[ferredoxin] + 2 ATP + 2 H2O. It participates in porphyrin-containing compound metabolism; bacteriochlorophyll biosynthesis (light-independent). Component of the dark-operative protochlorophyllide reductase (DPOR) that uses Mg-ATP and reduced ferredoxin to reduce ring D of protochlorophyllide (Pchlide) to form chlorophyllide a (Chlide). This reaction is light-independent. The L component serves as a unique electron donor to the NB-component of the complex, and binds Mg-ATP. The protein is Light-independent protochlorophyllide reductase iron-sulfur ATP-binding protein of Rhodopseudomonas palustris (strain ATCC BAA-98 / CGA009).